Reading from the N-terminus, the 154-residue chain is Large ribosomal subunit protein uL13 (154 aa).

It belongs to the universal ribosomal protein uL13 family. Part of the 50S ribosomal subunit.

Its function is as follows. This protein is one of the early assembly proteins of the 50S ribosomal subunit, although it is not seen to bind rRNA by itself. It is important during the early stages of 50S assembly. The protein is Large ribosomal subunit protein uL13 of Brucella canis (strain ATCC 23365 / NCTC 10854 / RM-666).